We begin with the raw amino-acid sequence, 351 residues long: 3-dehydroquinate synthase (351 aa).

NAD(+)-binding positions include 60 to 65, 94 to 98, 118 to 119, lysine 131, lysine 140, and 158 to 161; these read DGEEYK, GVISD, TT, and FLKT. 3 residues coordinate Zn(2+): glutamate 173, histidine 239, and histidine 256.

It belongs to the sugar phosphate cyclases superfamily. Dehydroquinate synthase family. The cofactor is Co(2+). Zn(2+) is required as a cofactor. NAD(+) serves as cofactor.

Its subcellular location is the cytoplasm. It catalyses the reaction 7-phospho-2-dehydro-3-deoxy-D-arabino-heptonate = 3-dehydroquinate + phosphate. It participates in metabolic intermediate biosynthesis; chorismate biosynthesis; chorismate from D-erythrose 4-phosphate and phosphoenolpyruvate: step 2/7. In terms of biological role, catalyzes the conversion of 3-deoxy-D-arabino-heptulosonate 7-phosphate (DAHP) to dehydroquinate (DHQ). This Campylobacter jejuni subsp. jejuni serotype O:6 (strain 81116 / NCTC 11828) protein is 3-dehydroquinate synthase.